Reading from the N-terminus, the 299-residue chain is CCR4-NOT transcription complex subunit 9 (299 aa).

This sequence belongs to the CNOT9 family. In terms of assembly, homodimer. Component of the CCR4-NOT complex.

It is found in the nucleus. The protein resides in the cytoplasm. It localises to the P-body. Component of the CCR4-NOT complex which is one of the major cellular mRNA deadenylases and is linked to various cellular processes including bulk mRNA degradation, miRNA-mediated repression, translational repression during translational initiation and general transcription regulation. Additional complex functions may be a consequence of its influence on mRNA expression. Involved in down-regulation of MYB- and JUN-dependent transcription. Enhances ligand-dependent transcriptional activity of nuclear hormone receptors. May play a role in cell differentiation. The sequence is that of CCR4-NOT transcription complex subunit 9 from Xenopus tropicalis (Western clawed frog).